The primary structure comprises 92 residues: Small ribosomal subunit protein uS19c (92 aa).

This sequence belongs to the universal ribosomal protein uS19 family.

Its subcellular location is the plastid. It is found in the chloroplast. Protein S19 forms a complex with S13 that binds strongly to the 16S ribosomal RNA. The protein is Small ribosomal subunit protein uS19c of Populus alba (White poplar).